A 422-amino-acid chain; its full sequence is Nucleoside transporter 1 (422 aa).

The Cytoplasmic segment spans residues 1-38 (MSTGKESSKAYADIESRGDYKDDGKKGSTLSSKQHFML). The chain crosses the membrane as a helical span at residues 39 to 59 (SLTFILIGLSSLNVWNTALGL). Trp53 contacts inosine. Residues 60-63 (NINF) are Extracellular-facing. A helical transmembrane segment spans residues 64 to 82 (KYNTFQITGLVCSSIVALF). Residues 83 to 87 (VEIPK) are Cytoplasmic-facing. A helical membrane pass occupies residues 88 to 107 (IMLPFLLGGLSILCAGFQIS). At 108 to 116 (HSFFTDTQF) the chain is on the extracellular side. The helical transmembrane segment at 117–139 (DTYCLVAFIVIGVVAGLAQTIAF) threads the bilayer. Gln135 is an inosine binding site. At 140 to 149 (NIGSTMEDNM) the chain is on the cytoplasmic side. A helical transmembrane segment spans residues 150-174 (GGYMSAGIGISGVFIFVINLLLDQF). Topologically, residues 175–185 (VSPEKHYGVNK) are extracellular. Residues 186–208 (AKLLYLYIICELCLILAIVFCVC) traverse the membrane as a helical segment. At 209 to 241 (NLDLTNKNNKKDEENKENNATLSYMELFKDSYK) the chain is on the cytoplasmic side. A helical membrane pass occupies residues 242-265 (AILTMFLVNWLTLQLFPGVGHKKW). Over 266-274 (QESHNISDY) the chain is Extracellular. The chain crosses the membrane as a helical span at residues 275 to 294 (NVTIIVGMFQVFDFLSRYPP). Residues Asp287 and Arg291 each contribute to the inosine site. Residues 295–309 (NLTHIKIFKNFTFSL) are Cytoplasmic-facing. The chain crosses the membrane as a helical span at residues 310–330 (NKLLVANSLRLLFIPWFILNA). Topologically, residues 331-338 (CVDHPFFK) are extracellular. The chain crosses the membrane as a helical span at residues 339–362 (NIVQQCVCMAMLAFTNGWFNTVPF). The Cytoplasmic portion of the chain corresponds to 363 to 374 (LVFVKELKKAKK). Residues 375-397 (KKEIEIISTFLVIAMFVGLFCGI) form a helical membrane-spanning segment. The Extracellular segment spans residues 398-422 (WTTYIYNLFNIVLPKPDLPPIDVTQ).

It belongs to the SLC29A/ENT transporter (TC 2.A.57) family.

The protein localises to the cell membrane. It catalyses the reaction inosine(in) = inosine(out). It carries out the reaction adenosine(in) = adenosine(out). The catalysed reaction is hypoxanthine(out) = hypoxanthine(in). The enzyme catalyses guanosine(in) = guanosine(out). It catalyses the reaction guanine(out) = guanine(in). It carries out the reaction thymidine(in) = thymidine(out). The catalysed reaction is uridine(out) = uridine(in). The enzyme catalyses uracil(in) = uracil(out). It catalyses the reaction thymine(out) = thymine(in). It carries out the reaction adenine(out) = adenine(in). The catalysed reaction is cytosine(out) = cytosine(in). The enzyme catalyses xanthine(out) = xanthine(in). GSK4 (5-methyl-N-[2-(2-oxo-1-azepanyl)ethyl]-2-phenyl-1,3-oxazole-4-carbox-amide) disrupts the transport activity at 500 nM. Inhibited partially by 10 uM dipyridamole. Inhibited partially by N,N'-1,3-benzothiazole-2,6-diyldi(2-furamide), 2-bromo-N-(4-[1,3]oxazolo[4,5-b]pyridin-2-ylphenyl)benzamide, 4-methyl-7-[(3,4,5-trimethoxybenzyl)oxy]-2H-chromen-2-one, 2-(1-methyl-1H-indol-3-yl)-2-oxo-N-[4-(pyrrolidin-1-ylcarbonyl)phenyl]acet amide and 2-[2-(2-methylphenyl)vinyl]-4(3H)-quinazolinone. In terms of biological role, sodium-independent nucleoside and nucleobase transporter with a broad substrate specificity. Plays a key role in the utilization of host purine sources by P.falciparum during intraerythrocytic development enabling parasite growth in the presence of physiological concentrations of adenosine, inosine, guanine, guanosine, xanthine and hypoxanthine. Essential for parasite transition from ring to trophozoite or from trophozoite to schizont stage but not for erythrocyte invasion by merozoites. The protein is Nucleoside transporter 1 of Plasmodium falciparum (isolate 3D7).